The chain runs to 213 residues: Orotate phosphoribosyltransferase (213 aa).

Lysine 26 provides a ligand contact to 5-phospho-alpha-D-ribose 1-diphosphate. Residue 34-35 (FF) participates in orotate binding. Residues 72 to 73 (YK), arginine 98, lysine 99, lysine 102, histidine 104, and 123 to 131 (DDVISAGTS) contribute to the 5-phospho-alpha-D-ribose 1-diphosphate site. Orotate-binding residues include serine 127 and arginine 155.

It belongs to the purine/pyrimidine phosphoribosyltransferase family. PyrE subfamily. As to quaternary structure, homodimer. It depends on Mg(2+) as a cofactor.

It carries out the reaction orotidine 5'-phosphate + diphosphate = orotate + 5-phospho-alpha-D-ribose 1-diphosphate. Its pathway is pyrimidine metabolism; UMP biosynthesis via de novo pathway; UMP from orotate: step 1/2. In terms of biological role, catalyzes the transfer of a ribosyl phosphate group from 5-phosphoribose 1-diphosphate to orotate, leading to the formation of orotidine monophosphate (OMP). This Neisseria meningitidis serogroup C (strain 053442) protein is Orotate phosphoribosyltransferase.